Consider the following 403-residue polypeptide: Poly(rC)-binding protein 4 (403 aa).

3 consecutive KH domains span residues 17–67 (TLTL…TITG), 101–154 (PVTL…TVSG), and 241–293 (TSSQ…TITG).

Widely expressed, with highest levels in testis and lowest in heart.

The protein resides in the cytoplasm. In terms of biological role, single-stranded nucleic acid binding protein that binds preferentially to oligo dC. The chain is Poly(rC)-binding protein 4 (Pcbp4) from Mus musculus (Mouse).